A 450-amino-acid polypeptide reads, in one-letter code: Probable ECA polymerase (450 aa).

A run of 11 helical transmembrane segments spans residues 6–26 (FSGL…LTWF), 37–57 (VFFS…TSVL), 63–83 (VGVA…CFYA), 118–138 (VILM…NGFL), 155–175 (GVAL…VYFL), 181–201 (AWLF…MIVG), 207–227 (IIIA…ISLW), 228–248 (MLAA…LKRY), 341–361 (LVVM…GLII), 378–398 (YKAA…IVLA), and 410–430 (VFFI…YWLF).

The protein belongs to the WzyE family. Probably part of a complex composed of WzxE, WzyE and WzzE.

The protein localises to the cell inner membrane. Its pathway is bacterial outer membrane biogenesis; enterobacterial common antigen biosynthesis. Functionally, probably involved in the polymerization of enterobacterial common antigen (ECA) trisaccharide repeat units. In Shigella boydii serotype 18 (strain CDC 3083-94 / BS512), this protein is Probable ECA polymerase.